Consider the following 119-residue polypeptide: NADH-quinone oxidoreductase subunit A (119 aa).

The next 3 helical transmembrane spans lie at 7-27, 63-83, and 88-108; these read FPVL…MTIG, LIAI…PWGV, and IGWP…VGFV.

This sequence belongs to the complex I subunit 3 family. NDH-1 is composed of 14 different subunits. Subunits NuoA, H, J, K, L, M, N constitute the membrane sector of the complex.

It localises to the cell inner membrane. It carries out the reaction a quinone + NADH + 5 H(+)(in) = a quinol + NAD(+) + 4 H(+)(out). In terms of biological role, NDH-1 shuttles electrons from NADH, via FMN and iron-sulfur (Fe-S) centers, to quinones in the respiratory chain. The immediate electron acceptor for the enzyme in this species is believed to be ubiquinone. Couples the redox reaction to proton translocation (for every two electrons transferred, four hydrogen ions are translocated across the cytoplasmic membrane), and thus conserves the redox energy in a proton gradient. The sequence is that of NADH-quinone oxidoreductase subunit A from Ralstonia nicotianae (strain ATCC BAA-1114 / GMI1000) (Ralstonia solanacearum).